An 802-amino-acid polypeptide reads, in one-letter code: Oligophrenin-1 (802 aa).

The region spanning 265–368 (QPTIEGYLYT…WMEAMDGKEP (104 aa)) is the PH domain. One can recognise a Rho-GAP domain in the interval 380 to 564 (MELNEVGFKF…ILIEHFGKIY (185 aa)). 3 disordered regions span residues 569-589 (EESA…HKPI), 607-770 (LDES…NAGE), and 783-802 (FETA…GDES). Positions 616 to 627 (HQTPNGTITSSI) are enriched in polar residues. Basic and acidic residues predominate over residues 716 to 732 (HHKEGDADSFSKVRPPG).

In terms of assembly, interacts with HOMER1. Interacts with AMPA receptor complexes. Interacts with SH3GL2 (endophilin-A1). Interacts (via C-terminus) with NR1D1.

The protein localises to the postsynapse. The protein resides in the presynapse. Its subcellular location is the cell projection. It localises to the axon. It is found in the dendritic spine. The protein localises to the dendrite. The protein resides in the cytoplasm. In terms of biological role, stimulates GTP hydrolysis of members of the Rho family. Its action on RHOA activity and signaling is implicated in growth and stabilization of dendritic spines, and therefore in synaptic function. Critical for the stabilization of AMPA receptors at postsynaptic sites. Critical for the regulation of synaptic vesicle endocytosis at pre-synaptic terminals. Required for the localization of NR1D1 to dendrites, can suppress its repressor activity and protect it from proteasomal degradation. This chain is Oligophrenin-1 (OPHN1), found in Pan troglodytes (Chimpanzee).